We begin with the raw amino-acid sequence, 174 residues long: RNA pyrophosphohydrolase (174 aa).

Residues 6–149 enclose the Nudix hydrolase domain; the sequence is GYRPNVGIIL…KRDVYLGALK (144 aa). Positions 38–59 match the Nudix box motif; that stretch reads GGIKPGESPETAMYRELYEEVG.

This sequence belongs to the Nudix hydrolase family. RppH subfamily. A divalent metal cation serves as cofactor.

Its function is as follows. Accelerates the degradation of transcripts by removing pyrophosphate from the 5'-end of triphosphorylated RNA, leading to a more labile monophosphorylated state that can stimulate subsequent ribonuclease cleavage. The protein is RNA pyrophosphohydrolase of Neisseria meningitidis serogroup C / serotype 2a (strain ATCC 700532 / DSM 15464 / FAM18).